Here is a 339-residue protein sequence, read N- to C-terminus: Probable cytosolic iron-sulfur protein assembly protein CIAO1 (339 aa).

WD repeat units follow at residues 14 to 53 (HPDS…WICK), 59 to 98 (GHQR…FECV), 103 to 142 (GHEN…EYEC), 148 to 187 (SHTQ…WVCC), 192 to 231 (GHES…NEQG), 250 to 289 (FHSR…DPQQ), and 301 to 339 (AHSQ…SEGI). An LYR motif; required for interaction with HSC20 motif is present at residues 176 to 178 (LYR).

This sequence belongs to the WD repeat CIA1 family. As to quaternary structure, component of the CIA complex. Interacts with CIAO2A and forms a complex with CIAO2B and MMS19; the interactions with CIAO2A and CIAO2B are mutually exclusive. Interacts with CHD1L, ERCC2, IREB2 and POLD1. Component of the MMXD complex, which includes CIAO1, ERCC2, CIAO2B, MMS19 and SLC25A5. Interacts with WT1. Interacts with CIAO3. Interacts (via LYR motif) with HSC20.

It localises to the cytoplasm. Key component of the cytosolic iron-sulfur protein assembly (CIA) complex, a multiprotein complex that mediates the incorporation of iron-sulfur cluster into extramitochondrial Fe/S proteins. As a CIA complex component, interacts specifically with CIAO2A or CIAO2B and MMS19 to assist different branches of iron-sulfur protein assembly, depending of its interactors. The complex CIAO1:CIAO2B:MMS19 binds to and facilitates the assembly of most cytosolic-nuclear Fe/S proteins. CIAO1:CIAO2A specifically matures ACO1 and stabilizes IREB2. Seems to specifically modulate the transactivation activity of WT1. As part of the mitotic spindle-associated MMXD complex it may play a role in chromosome segregation. The protein is Probable cytosolic iron-sulfur protein assembly protein CIAO1 of Bos taurus (Bovine).